The sequence spans 427 residues: Histidinol dehydrogenase (427 aa).

NAD(+) is bound by residues Y127, Q185, and N208. Substrate is bound by residues S232, Q254, and H257. Residues Q254 and H257 each contribute to the Zn(2+) site. Active-site proton acceptor residues include E321 and H322. Residues H322, D355, E409, and H414 each contribute to the substrate site. Residue D355 coordinates Zn(2+). H414 is a Zn(2+) binding site.

This sequence belongs to the histidinol dehydrogenase family. Zn(2+) is required as a cofactor.

It carries out the reaction L-histidinol + 2 NAD(+) + H2O = L-histidine + 2 NADH + 3 H(+). It participates in amino-acid biosynthesis; L-histidine biosynthesis; L-histidine from 5-phospho-alpha-D-ribose 1-diphosphate: step 9/9. Catalyzes the sequential NAD-dependent oxidations of L-histidinol to L-histidinaldehyde and then to L-histidine. This chain is Histidinol dehydrogenase, found in Haemophilus influenzae (strain 86-028NP).